We begin with the raw amino-acid sequence, 128 residues long: Kinetoplast-associated protein 4 (128 aa).

Residues 1-10 constitute a propeptide that is removed on maturation; sequence MLRFVPRRLA. The tract at residues 60–87 is disordered; sequence AHPGFKRKEKEPKELKAAKAAKTSTPRA. Residues 65-76 show a composition bias toward basic and acidic residues; sequence KRKEKEPKELKA.

It belongs to the KAP family. Associates with the kinetoplast DNA network.

Its subcellular location is the mitochondrion matrix. The protein localises to the kinetoplast. In terms of biological role, histone H1-like DNA-binding protein involved in the organization and segregation of kinetoplast DNA (kDNA). The mitochondrial DNA of kinetoplastid protozoa consists of about 5,000 minicircles and 20 to 30 maxicircles. These circular DNAs are held together by catenation into a highly organized compact disk structure referred to as a kinetoplast DNA (kDNA) network. Binds preferentially to a specific fragment of minicircle DNA and is able to compact kDNA networks through DNA charge neutralization and condensation. This is Kinetoplast-associated protein 4 (KAP4) from Crithidia fasciculata.